A 169-amino-acid polypeptide reads, in one-letter code: S-ribosylhomocysteine lyase (169 aa).

Residues histidine 54, histidine 58, and cysteine 128 each coordinate Fe cation.

Belongs to the LuxS family. As to quaternary structure, homodimer. The cofactor is Fe cation.

It catalyses the reaction S-(5-deoxy-D-ribos-5-yl)-L-homocysteine = (S)-4,5-dihydroxypentane-2,3-dione + L-homocysteine. In terms of biological role, involved in the synthesis of autoinducer 2 (AI-2) which is secreted by bacteria and is used to communicate both the cell density and the metabolic potential of the environment. The regulation of gene expression in response to changes in cell density is called quorum sensing. Catalyzes the transformation of S-ribosylhomocysteine (RHC) to homocysteine (HC) and 4,5-dihydroxy-2,3-pentadione (DPD). The protein is S-ribosylhomocysteine lyase of Shewanella sp. (strain MR-4).